We begin with the raw amino-acid sequence, 277 residues long: uncharacterized protein (277 aa).

The next 7 membrane-spanning stretches (helical) occupy residues 23–43, 61–81, 117–137, 144–164, 197–217, 221–241, and 243–263; these read CIGGLMSAIVGAMSGVTTAFI, FLIYFGIIFIIGLIVSAIIGG, LVLLNIIFYFIPAILFVFGIF, IIGAFLIIISILIFIISVISL, YIILVIIIAIINFIISLIVVL, IIDIFISYSALANSILTIIYI, and IKGISYALSTFVDFYLGVFSI.

It to M.jannaschii MJ1189.

It is found in the cell membrane. This is an uncharacterized protein from Methanocaldococcus jannaschii (strain ATCC 43067 / DSM 2661 / JAL-1 / JCM 10045 / NBRC 100440) (Methanococcus jannaschii).